The following is a 185-amino-acid chain: Ribosome-recycling factor (185 aa).

The protein belongs to the RRF family.

It is found in the cytoplasm. Responsible for the release of ribosomes from messenger RNA at the termination of protein biosynthesis. May increase the efficiency of translation by recycling ribosomes from one round of translation to another. Its function is as follows. Plays a role in sporulation. The sequence is that of Ribosome-recycling factor from Bacillus subtilis (strain 168).